The primary structure comprises 428 residues: Trigger factor (428 aa).

The 86-residue stretch at 163-248 folds into the PPIase FKBP-type domain; the sequence is GDTAIIDFEG…INDVKVKELS (86 aa).

It belongs to the FKBP-type PPIase family. Tig subfamily.

It localises to the cytoplasm. It catalyses the reaction [protein]-peptidylproline (omega=180) = [protein]-peptidylproline (omega=0). In terms of biological role, involved in protein export. Acts as a chaperone by maintaining the newly synthesized protein in an open conformation. Functions as a peptidyl-prolyl cis-trans isomerase. The polypeptide is Trigger factor (Clostridioides difficile (strain 630) (Peptoclostridium difficile)).